Consider the following 845-residue polypeptide: MAALQRFPLSKGWSFKDSEDKSEDAWMPVPVVPSVVQQDLQANNKLKDPYIGFNELETRWVNEKSWTYKTTFQKPAVPAGSAIFLAFDGLDTFATVKLDGNVILESDNMFLAHRLDVTKALEAEGDHSLEIDFDCAFLRAKELRKQDSKHNWASFNGDPSRLSVRKSQYHWGWDWGPVLMTAGIWREVRLEVYTARVADLWTDVQLASDHQNAQITAFAEVESVNSDAHKARFTLSLHGQELGREEVSVSEDGSAKVSFDVKSPSLWWPHGYGDATLYEVSVSLVKDQDEVHQVSKKFGIRTAEVVQQPDKHGKSFFFRVNGVDIFCGGSCWIPADNYLPSVTADRYRKWIELMVHGRQVMIRVWGGGNYEDDSFYDACDELGVLVWQDFMFGCGNYPTWPNLLESIRKESVYNVRRLRHHPSIVVWVGNNEDYQVQESAGLTYDFEDKNPENWLKTDFPARYIYEKILPEVVEEYSPSTFYHPGSPWGDGKTTSDPTVGDMHQWNVWHGTQEKYQIFDTLGGRFNSEFGMEAFPHMSTIDYFVENEADKFPQSHVLDFHNKADGHERRIATYLVENLRTATDLETHVYLTQVVQAETMMFGYRGWRRQWGDERHCGGALLWQLNDCWPTISWAIVDYFLRPKPAFYAVARVLNPIAVGVRREHHDWSVTHAQPPKTSKFELWVASSLQKEVQGTVELRFLSINTGLEVRERIVHENVSIVPNGTTNLIVDGLIDYKVHPEPHVLAVRIWVNGELVARDVDWPQPFKYLDLSNRGLEVKLVSESENEQTLLLSAQKPVKCLVFEEREGVRISDSAIDIVPGDEQRVTIKGMKPGDAPLKYKFLGQ.

The Proton donor role is filled by glutamate 432. Asparagine 717 and asparagine 723 each carry an N-linked (GlcNAc...) asparagine glycan.

Belongs to the glycosyl hydrolase 2 family. Beta-mannosidase B subfamily.

The catalysed reaction is Hydrolysis of terminal, non-reducing beta-D-mannose residues in beta-D-mannosides.. It participates in glycan metabolism; N-glycan degradation. Functionally, exoglycosidase that cleaves the single beta-linked mannose residue from the non-reducing end of beta-mannosidic oligosaccharides of various complexity and length. Prefers mannobiose over mannotriose and has no activity against polymeric mannan. Is also severely restricted by galactosyl substitutions at the +1 subsite. The protein is Beta-mannosidase B (mndB) of Aspergillus clavatus (strain ATCC 1007 / CBS 513.65 / DSM 816 / NCTC 3887 / NRRL 1 / QM 1276 / 107).